The sequence spans 598 residues: Elongation factor 4 (598 aa).

Residues Ser-5–Thr-187 form the tr-type G domain. Residues Asp-17–Thr-22 and Asn-134–Asp-137 contribute to the GTP site.

This sequence belongs to the TRAFAC class translation factor GTPase superfamily. Classic translation factor GTPase family. LepA subfamily.

The protein resides in the cell inner membrane. The catalysed reaction is GTP + H2O = GDP + phosphate + H(+). Its function is as follows. Required for accurate and efficient protein synthesis under certain stress conditions. May act as a fidelity factor of the translation reaction, by catalyzing a one-codon backward translocation of tRNAs on improperly translocated ribosomes. Back-translocation proceeds from a post-translocation (POST) complex to a pre-translocation (PRE) complex, thus giving elongation factor G a second chance to translocate the tRNAs correctly. Binds to ribosomes in a GTP-dependent manner. This Pseudomonas syringae pv. syringae (strain B728a) protein is Elongation factor 4.